Consider the following 642-residue polypeptide: Threonine--tRNA ligase (642 aa).

The TGS domain maps to 1–61 (MPVVTLPDGS…DSDANLAIIT (61 aa)). The interval 243–534 (DHRKIGKQLD…LTEEYAGFFP (292 aa)) is catalytic. Residues Cys-334, His-385, and His-511 each coordinate Zn(2+).

This sequence belongs to the class-II aminoacyl-tRNA synthetase family. In terms of assembly, homodimer. Zn(2+) is required as a cofactor.

Its subcellular location is the cytoplasm. It carries out the reaction tRNA(Thr) + L-threonine + ATP = L-threonyl-tRNA(Thr) + AMP + diphosphate + H(+). Functionally, catalyzes the attachment of threonine to tRNA(Thr) in a two-step reaction: L-threonine is first activated by ATP to form Thr-AMP and then transferred to the acceptor end of tRNA(Thr). Also edits incorrectly charged L-seryl-tRNA(Thr). In Photorhabdus laumondii subsp. laumondii (strain DSM 15139 / CIP 105565 / TT01) (Photorhabdus luminescens subsp. laumondii), this protein is Threonine--tRNA ligase.